We begin with the raw amino-acid sequence, 121 residues long: Large ribosomal subunit protein bL17 (121 aa).

Belongs to the bacterial ribosomal protein bL17 family. Part of the 50S ribosomal subunit. Contacts protein L32.

The protein is Large ribosomal subunit protein bL17 of Metamycoplasma arthritidis (strain 158L3-1) (Mycoplasma arthritidis).